The following is a 610-amino-acid chain: Isocitrate dehydrogenase kinase/phosphatase (610 aa).

ATP-binding positions include 359 to 365 (APGFKGT) and Lys-380. Residue Asp-419 is part of the active site.

The protein belongs to the AceK family.

Its subcellular location is the cytoplasm. It carries out the reaction L-seryl-[isocitrate dehydrogenase] + ATP = O-phospho-L-seryl-[isocitrate dehydrogenase] + ADP + H(+). Functionally, bifunctional enzyme which can phosphorylate or dephosphorylate isocitrate dehydrogenase (IDH) on a specific serine residue. This is a regulatory mechanism which enables bacteria to bypass the Krebs cycle via the glyoxylate shunt in response to the source of carbon. When bacteria are grown on glucose, IDH is fully active and unphosphorylated, but when grown on acetate or ethanol, the activity of IDH declines drastically concomitant with its phosphorylation. The polypeptide is Isocitrate dehydrogenase kinase/phosphatase (Rhodopseudomonas palustris (strain ATCC BAA-98 / CGA009)).